The sequence spans 232 residues: Large ribosomal subunit protein uL1 (232 aa).

This sequence belongs to the universal ribosomal protein uL1 family. In terms of assembly, part of the 50S ribosomal subunit.

Binds directly to 23S rRNA. The L1 stalk is quite mobile in the ribosome, and is involved in E site tRNA release. Functionally, protein L1 is also a translational repressor protein, it controls the translation of the L11 operon by binding to its mRNA. In Bacillus pumilus (strain SAFR-032), this protein is Large ribosomal subunit protein uL1.